We begin with the raw amino-acid sequence, 81 residues long: Photosystem I iron-sulfur center (81 aa).

4Fe-4S ferredoxin-type domains lie at 2 to 31 and 39 to 68; these read SHFV…MIPW and IASA…VRVY. Cysteine 11, cysteine 14, cysteine 17, cysteine 21, cysteine 48, cysteine 51, cysteine 54, and cysteine 58 together coordinate [4Fe-4S] cluster.

As to quaternary structure, the eukaryotic PSI reaction center is composed of at least 11 subunits. [4Fe-4S] cluster serves as cofactor.

It localises to the plastid thylakoid membrane. It catalyses the reaction reduced [plastocyanin] + hnu + oxidized [2Fe-2S]-[ferredoxin] = oxidized [plastocyanin] + reduced [2Fe-2S]-[ferredoxin]. Its function is as follows. Apoprotein for the two 4Fe-4S centers FA and FB of photosystem I (PSI); essential for photochemical activity. FB is the terminal electron acceptor of PSI, donating electrons to ferredoxin. The C-terminus interacts with PsaA/B/D and helps assemble the protein into the PSI complex. Required for binding of PsaD and PsaE to PSI. PSI is a plastocyanin-ferredoxin oxidoreductase, converting photonic excitation into a charge separation, which transfers an electron from the donor P700 chlorophyll pair to the spectroscopically characterized acceptors A0, A1, FX, FA and FB in turn. This chain is Photosystem I iron-sulfur center, found in Cuscuta exaltata (Tall dodder).